A 267-amino-acid polypeptide reads, in one-letter code: MEMO1 family protein aq_890 (267 aa).

It belongs to the MEMO1 family.

The polypeptide is MEMO1 family protein aq_890 (Aquifex aeolicus (strain VF5)).